We begin with the raw amino-acid sequence, 197 residues long: Cerebellin-3 (197 aa).

The N-terminal stretch at 1–24 (MGTEWHKPKLSLALVLLTLEAGWA) is a signal peptide. The C1q domain occupies 59 to 197 (APPGRVAFAA…SFSGFLIFPL (139 aa)). Residues 64 to 197 (VAFAAVRSHH…SFSGFLIFPL (134 aa)) form a necessary for interaction with CBLN3, and homotrimerization region. Asn-82 carries an N-linked (GlcNAc...) asparagine glycan.

In terms of assembly, heterohexamer; disulfide-linked heterotrimers. Interacts with CBLN1. May also form oligomers with CBLN2 and CBLN4. As to expression, expressed in brain, restricted to the cerebellar cortex. Within the cerebellum, expressed in granule layers (at protein level). Also detected in postsynaptic Purkinje cell spines (at protein level).

It is found in the endoplasmic reticulum. Its subcellular location is the golgi apparatus. The protein localises to the cis-Golgi network. The protein resides in the secreted. It localises to the synapse. Functionally, may be involved in synaptic functions in the CNS. This is Cerebellin-3 (Cbln3) from Mus musculus (Mouse).